We begin with the raw amino-acid sequence, 106 residues long: Phosphoribosyl-ATP pyrophosphatase (106 aa).

It belongs to the PRA-PH family.

The protein resides in the cytoplasm. It carries out the reaction 1-(5-phospho-beta-D-ribosyl)-ATP + H2O = 1-(5-phospho-beta-D-ribosyl)-5'-AMP + diphosphate + H(+). Its pathway is amino-acid biosynthesis; L-histidine biosynthesis; L-histidine from 5-phospho-alpha-D-ribose 1-diphosphate: step 2/9. This chain is Phosphoribosyl-ATP pyrophosphatase, found in Rhizorhabdus wittichii (strain DSM 6014 / CCUG 31198 / JCM 15750 / NBRC 105917 / EY 4224 / RW1) (Sphingomonas wittichii).